A 258-amino-acid chain; its full sequence is MSLIDPRAIIDPSARLAADVQVGPWSIVGAEVEIGEGTVIGPHVVLKGPTKIGKHNRIYQFSSVGEDTPDLKYKGEPTRLVIGDHNVIREGVTIHRGTVQDRAETTIGDHNLIMAYAHIGHDSVIGNHCILVNNTALAGHVHVDDWAILSGYTLVHQYCRIGAHSFSGMGSAIGKDVPAYVTVFGNPAEARSMNFEGMRRRGFSSEAIHALRRAYKVVYRQGHTVEEALAELAESAAQFPEVAVFRDSIQSATRGITR.

This sequence belongs to the transferase hexapeptide repeat family. LpxA subfamily. Homotrimer.

It is found in the cytoplasm. It carries out the reaction a (3R)-hydroxyacyl-[ACP] + UDP-N-acetyl-alpha-D-glucosamine = a UDP-3-O-[(3R)-3-hydroxyacyl]-N-acetyl-alpha-D-glucosamine + holo-[ACP]. The protein operates within glycolipid biosynthesis; lipid IV(A) biosynthesis; lipid IV(A) from (3R)-3-hydroxytetradecanoyl-[acyl-carrier-protein] and UDP-N-acetyl-alpha-D-glucosamine: step 1/6. In terms of biological role, involved in the biosynthesis of lipid A, a phosphorylated glycolipid that anchors the lipopolysaccharide to the outer membrane of the cell. This is Acyl-[acyl-carrier-protein]--UDP-N-acetylglucosamine O-acyltransferase from Pseudomonas aeruginosa (strain LESB58).